A 214-amino-acid polypeptide reads, in one-letter code: Probable septum site-determining protein MinC (214 aa).

It belongs to the MinC family. As to quaternary structure, interacts with MinD and FtsZ.

Functionally, cell division inhibitor that blocks the formation of polar Z ring septums. Rapidly oscillates between the poles of the cell to destabilize FtsZ filaments that have formed before they mature into polar Z rings. Prevents FtsZ polymerization. The sequence is that of Probable septum site-determining protein MinC from Thermoanaerobacter pseudethanolicus (strain ATCC 33223 / 39E) (Clostridium thermohydrosulfuricum).